Reading from the N-terminus, the 98-residue chain is MSFPLTPLEDKIIVKQAEAETQTASGLIIPDNAKEKPQQGEVLAVGPGRRDDEGKRVPMDVKVGDKVLYSKYGGTEVHFKGEEYLIVSARDLLAVVND.

Positions 32-56 (NAKEKPQQGEVLAVGPGRRDDEGKR) are disordered.

Belongs to the GroES chaperonin family. Heptamer of 7 subunits arranged in a ring. Interacts with the chaperonin GroEL.

It is found in the cytoplasm. In terms of biological role, together with the chaperonin GroEL, plays an essential role in assisting protein folding. The GroEL-GroES system forms a nano-cage that allows encapsulation of the non-native substrate proteins and provides a physical environment optimized to promote and accelerate protein folding. GroES binds to the apical surface of the GroEL ring, thereby capping the opening of the GroEL channel. This Bifidobacterium animalis subsp. lactis (strain AD011) protein is Co-chaperonin GroES.